A 261-amino-acid polypeptide reads, in one-letter code: Phosphonates import ATP-binding protein PhnC (261 aa).

The ABC transporter domain maps to 15 to 257 (LCLENTSAVY…LERSAIPPKR (243 aa)). 48-55 (GPSGSGKS) contributes to the ATP binding site.

It belongs to the ABC transporter superfamily. Phosphonates importer (TC 3.A.1.9.1) family. The complex is composed of two ATP-binding proteins (PhnC), two transmembrane proteins (PhnE) and a solute-binding protein (PhnD).

Its subcellular location is the cell inner membrane. It carries out the reaction phosphonate(out) + ATP + H2O = phosphonate(in) + ADP + phosphate + H(+). Part of the ABC transporter complex PhnCDE involved in phosphonates import. Responsible for energy coupling to the transport system. The sequence is that of Phosphonates import ATP-binding protein PhnC from Hyphomonas neptunium (strain ATCC 15444).